Reading from the N-terminus, the 171-residue chain is MTRQNAYSRDQLLASARGELFGPNSGRLPNDPMLMFDRITEINDNGGSHGKGLIRAELDIRPDLWFFNCHFIGDPVMPGCLGLDAMWQLTGFFLTWIGAPGRGRALGCGEVKFTGQVLPTATLVTYEIEISRVINRKLVMAQSDARMLVDGREIYAAKDLRVGMFTSTENF.

Residue His-70 is part of the active site.

It belongs to the thioester dehydratase family. FabA subfamily. As to quaternary structure, homodimer.

Its subcellular location is the cytoplasm. It catalyses the reaction a (3R)-hydroxyacyl-[ACP] = a (2E)-enoyl-[ACP] + H2O. The catalysed reaction is (3R)-hydroxydecanoyl-[ACP] = (2E)-decenoyl-[ACP] + H2O. The enzyme catalyses (2E)-decenoyl-[ACP] = (3Z)-decenoyl-[ACP]. The protein operates within lipid metabolism; fatty acid biosynthesis. Functionally, necessary for the introduction of cis unsaturation into fatty acids. Catalyzes the dehydration of (3R)-3-hydroxydecanoyl-ACP to E-(2)-decenoyl-ACP and then its isomerization to Z-(3)-decenoyl-ACP. Can catalyze the dehydratase reaction for beta-hydroxyacyl-ACPs with saturated chain lengths up to 16:0, being most active on intermediate chain length. This Xanthomonas campestris pv. campestris (strain 8004) protein is 3-hydroxydecanoyl-[acyl-carrier-protein] dehydratase.